Consider the following 212-residue polypeptide: Uracil phosphoribosyltransferase (212 aa).

Residues arginine 78, arginine 103, and 130–138 (DPMLATGSS) each bind 5-phospho-alpha-D-ribose 1-diphosphate. Residues isoleucine 193 and 198 to 200 (GDA) contribute to the uracil site. Position 199 (aspartate 199) interacts with 5-phospho-alpha-D-ribose 1-diphosphate.

Belongs to the UPRTase family. Mg(2+) serves as cofactor.

The catalysed reaction is UMP + diphosphate = 5-phospho-alpha-D-ribose 1-diphosphate + uracil. Its pathway is pyrimidine metabolism; UMP biosynthesis via salvage pathway; UMP from uracil: step 1/1. Allosterically activated by GTP. Its function is as follows. Catalyzes the conversion of uracil and 5-phospho-alpha-D-ribose 1-diphosphate (PRPP) to UMP and diphosphate. This is Uracil phosphoribosyltransferase from Pseudomonas savastanoi pv. phaseolicola (strain 1448A / Race 6) (Pseudomonas syringae pv. phaseolicola (strain 1448A / Race 6)).